A 226-amino-acid polypeptide reads, in one-letter code: Protein FMP52-1, mitochondrial (226 aa).

The N-terminal 43 residues, 1–43, are a transit peptide targeting the mitochondrion; sequence MSAFVLGSTGLVGLQILKVLDSSTAFKKVSTVSRRLPSVTSGK.

This sequence belongs to the FMP52 family.

Its subcellular location is the mitochondrion outer membrane. The protein is Protein FMP52-1, mitochondrial (FMP521) of Scheffersomyces stipitis (strain ATCC 58785 / CBS 6054 / NBRC 10063 / NRRL Y-11545) (Yeast).